Reading from the N-terminus, the 147-residue chain is Large ribosomal subunit protein uL15 (147 aa).

A compositionally biased stretch (basic and acidic residues) spans 1-20; the sequence is MTMHLNDLKPADGARTERTR. The segment at 1 to 64 is disordered; that stretch reads MTMHLNDLKP…GGQTPMQRRL (64 aa). Residues 23 to 33 are compositionally biased toward gly residues; the sequence is RGIGSGLGKTC. A compositionally biased stretch (basic residues) spans 34–47; the sequence is GRGHKGSFARKGGG.

It belongs to the universal ribosomal protein uL15 family. In terms of assembly, part of the 50S ribosomal subunit.

In terms of biological role, binds to the 23S rRNA. This Xanthomonas campestris pv. campestris (strain 8004) protein is Large ribosomal subunit protein uL15.